The following is a 216-amino-acid chain: Orotate phosphoribosyltransferase (216 aa).

Lysine 30 serves as a coordination point for 5-phospho-alpha-D-ribose 1-diphosphate. 38–39 (FF) is an orotate binding site. 5-phospho-alpha-D-ribose 1-diphosphate contacts are provided by residues 75–76 (YK), arginine 102, lysine 103, lysine 106, histidine 108, and 128–136 (DDVITAGTA). Orotate-binding residues include threonine 132 and arginine 160.

This sequence belongs to the purine/pyrimidine phosphoribosyltransferase family. PyrE subfamily. As to quaternary structure, homodimer. The cofactor is Mg(2+).

The enzyme catalyses orotidine 5'-phosphate + diphosphate = orotate + 5-phospho-alpha-D-ribose 1-diphosphate. Its pathway is pyrimidine metabolism; UMP biosynthesis via de novo pathway; UMP from orotate: step 1/2. Its function is as follows. Catalyzes the transfer of a ribosyl phosphate group from 5-phosphoribose 1-diphosphate to orotate, leading to the formation of orotidine monophosphate (OMP). This Acinetobacter baumannii (strain ACICU) protein is Orotate phosphoribosyltransferase.